Consider the following 498-residue polypeptide: ATP synthase subunit beta, chloroplastic (498 aa).

G172–T179 contacts ATP.

Belongs to the ATPase alpha/beta chains family. As to quaternary structure, F-type ATPases have 2 components, CF(1) - the catalytic core - and CF(0) - the membrane proton channel. CF(1) has five subunits: alpha(3), beta(3), gamma(1), delta(1), epsilon(1). CF(0) has four main subunits: a(1), b(1), b'(1) and c(9-12).

The protein resides in the plastid. Its subcellular location is the chloroplast thylakoid membrane. It catalyses the reaction ATP + H2O + 4 H(+)(in) = ADP + phosphate + 5 H(+)(out). Functionally, produces ATP from ADP in the presence of a proton gradient across the membrane. The catalytic sites are hosted primarily by the beta subunits. This Jasminum nudiflorum (Winter jasmine) protein is ATP synthase subunit beta, chloroplastic.